Here is a 389-residue protein sequence, read N- to C-terminus: Alpha-2B adrenergic receptor (389 aa).

A helical transmembrane segment spans residues 1–25 (AIAAVITFLILFTIFGNALVILAVL). The Cytoplasmic segment spans residues 26 to 36 (TSRSLRAPQNL). A helical transmembrane segment spans residues 37–62 (FLVSLAAADILVATLIIPFSLANELL). Residues 63 to 72 (GYWYFWRTWC) are Extracellular-facing. A disulfide bond links C72 and C151. A helical membrane pass occupies residues 73–95 (EVYLALDVLFCTSSIVHLCAISL). At 96-117 (DRYWAVSRALEYNSKRTPRRIK) the chain is on the cytoplasmic side. Residues 118–140 (CIILTVWLIAAAISLPPLIYKGD) traverse the membrane as a helical segment. Residues 141–156 (QGPQPRGRPQCMLNQE) are Extracellular-facing. Residues 157–180 (AWYILSSSIGSFFAPCLIMILVYL) traverse the membrane as a helical segment. At 181 to 353 (RIYLIAKRSN…LTREKRFTFV (173 aa)) the chain is on the cytoplasmic side. Disordered regions lie at residues 192-218 (RGPR…PLAL) and 231-310 (DGEA…HLQQ). A compositionally biased stretch (basic and acidic residues) spans 234–249 (ANGHSKLTGEKERETS). Residues 354-377 (LTVVIGVFVLCWFPFFFSYSLGAI) form a helical membrane-spanning segment. Residues 378–386 (CPQHCKVPH) lie on the Extracellular side of the membrane. The chain crosses the membrane as a helical span at residues 387–389 (GLF).

It belongs to the G-protein coupled receptor 1 family. Adrenergic receptor subfamily. ADRA2B sub-subfamily. Interacts with RAB26. Interacts with PPP1R9B.

The protein resides in the cell membrane. Functionally, alpha-2 adrenergic receptors mediate the catecholamine-induced inhibition of adenylate cyclase through the action of G proteins. This is Alpha-2B adrenergic receptor (ADRA2B) from Procavia capensis habessinica (Abyssinian hyrax).